Here is a 192-residue protein sequence, read N- to C-terminus: Fe/S biogenesis protein NfuA (192 aa).

Residues C149 and C152 each contribute to the [4Fe-4S] cluster site.

This sequence belongs to the NfuA family. Homodimer. It depends on [4Fe-4S] cluster as a cofactor.

Involved in iron-sulfur cluster biogenesis. Binds a 4Fe-4S cluster, can transfer this cluster to apoproteins, and thereby intervenes in the maturation of Fe/S proteins. Could also act as a scaffold/chaperone for damaged Fe/S proteins. The polypeptide is Fe/S biogenesis protein NfuA (Shewanella piezotolerans (strain WP3 / JCM 13877)).